The primary structure comprises 380 residues: Probable tRNA sulfurtransferase (380 aa).

One can recognise a THUMP domain in the interval 58–162 (EEVIERLKKV…MAFVYAGVIE (105 aa)). ATP-binding positions include 178-179 (LL), 203-204 (YF), Arg260, Gly282, and Gln291.

This sequence belongs to the ThiI family.

The protein localises to the cytoplasm. It carries out the reaction [ThiI sulfur-carrier protein]-S-sulfanyl-L-cysteine + a uridine in tRNA + 2 reduced [2Fe-2S]-[ferredoxin] + ATP + H(+) = [ThiI sulfur-carrier protein]-L-cysteine + a 4-thiouridine in tRNA + 2 oxidized [2Fe-2S]-[ferredoxin] + AMP + diphosphate. The catalysed reaction is [ThiS sulfur-carrier protein]-C-terminal Gly-Gly-AMP + S-sulfanyl-L-cysteinyl-[cysteine desulfurase] + AH2 = [ThiS sulfur-carrier protein]-C-terminal-Gly-aminoethanethioate + L-cysteinyl-[cysteine desulfurase] + A + AMP + 2 H(+). Its pathway is cofactor biosynthesis; thiamine diphosphate biosynthesis. Functionally, catalyzes the ATP-dependent transfer of a sulfur to tRNA to produce 4-thiouridine in position 8 of tRNAs, which functions as a near-UV photosensor. Also catalyzes the transfer of sulfur to the sulfur carrier protein ThiS, forming ThiS-thiocarboxylate. This is a step in the synthesis of thiazole, in the thiamine biosynthesis pathway. The sulfur is donated as persulfide by IscS. The chain is Probable tRNA sulfurtransferase from Thermoanaerobacter pseudethanolicus (strain ATCC 33223 / 39E) (Clostridium thermohydrosulfuricum).